The following is a 477-amino-acid chain: Ribulose bisphosphate carboxylase large chain (477 aa).

A propeptide spanning residues 1–2 (MS) is cleaved from the precursor. N-acetylproline is present on proline 3. Lysine 14 carries the post-translational modification N6,N6,N6-trimethyllysine. Positions 123 and 173 each coordinate substrate. The active-site Proton acceptor is lysine 175. Residue lysine 177 coordinates substrate. Lysine 201, aspartate 203, and glutamate 204 together coordinate Mg(2+). Lysine 201 is subject to N6-carboxylysine. The Proton acceptor role is filled by histidine 294. Substrate contacts are provided by arginine 295, histidine 327, and serine 379.

It belongs to the RuBisCO large chain family. Type I subfamily. Heterohexadecamer of 8 large chains and 8 small chains; disulfide-linked. The disulfide link is formed within the large subunit homodimers. Requires Mg(2+) as cofactor. In terms of processing, the disulfide bond which can form in the large chain dimeric partners within the hexadecamer appears to be associated with oxidative stress and protein turnover.

The protein localises to the plastid. The protein resides in the chloroplast. It carries out the reaction 2 (2R)-3-phosphoglycerate + 2 H(+) = D-ribulose 1,5-bisphosphate + CO2 + H2O. The catalysed reaction is D-ribulose 1,5-bisphosphate + O2 = 2-phosphoglycolate + (2R)-3-phosphoglycerate + 2 H(+). In terms of biological role, ruBisCO catalyzes two reactions: the carboxylation of D-ribulose 1,5-bisphosphate, the primary event in carbon dioxide fixation, as well as the oxidative fragmentation of the pentose substrate in the photorespiration process. Both reactions occur simultaneously and in competition at the same active site. The polypeptide is Ribulose bisphosphate carboxylase large chain (Nicotiana debneyi (Debney's tobacco)).